Reading from the N-terminus, the 198-residue chain is Holliday junction branch migration complex subunit RuvA (198 aa).

The tract at residues 1–64 is domain I; that stretch reads MYEYIKGEYM…EDFIGLYGFE (64 aa). The segment at 65–143 is domain II; sequence SLEELDMFKL…SDELLNCIDE (79 aa). The segment at 144 to 154 is flexible linker; it reads FDDVTQDNSLA. The interval 154–198 is domain III; that stretch reads ALSEALSALISLGYTEKEAEKVLKDVDKSESVENIIKSALVKLMG.

It belongs to the RuvA family. As to quaternary structure, homotetramer. Forms an RuvA(8)-RuvB(12)-Holliday junction (HJ) complex. HJ DNA is sandwiched between 2 RuvA tetramers; dsDNA enters through RuvA and exits via RuvB. An RuvB hexamer assembles on each DNA strand where it exits the tetramer. Each RuvB hexamer is contacted by two RuvA subunits (via domain III) on 2 adjacent RuvB subunits; this complex drives branch migration. In the full resolvosome a probable DNA-RuvA(4)-RuvB(12)-RuvC(2) complex forms which resolves the HJ.

It localises to the cytoplasm. The RuvA-RuvB-RuvC complex processes Holliday junction (HJ) DNA during genetic recombination and DNA repair, while the RuvA-RuvB complex plays an important role in the rescue of blocked DNA replication forks via replication fork reversal (RFR). RuvA specifically binds to HJ cruciform DNA, conferring on it an open structure. The RuvB hexamer acts as an ATP-dependent pump, pulling dsDNA into and through the RuvAB complex. HJ branch migration allows RuvC to scan DNA until it finds its consensus sequence, where it cleaves and resolves the cruciform DNA. In Clostridium botulinum (strain Alaska E43 / Type E3), this protein is Holliday junction branch migration complex subunit RuvA.